A 723-amino-acid chain; its full sequence is MDEMSAYVAYGMKKTAKKPAKKTTKQNRQKQKAANIYSLATSTPAKISAVKQNNGAKGKAKANGVKGNAKAQTTKDSATNSVAKMADESVDDYSSDSSYDEDEDNEELSHSSNEDDYGSELSSGEEFEEYTLNSPSGSCSCSASSGSSNTENSPPAATSSRTPKKRSTGDMDDNNNKSPAVKQQKLQPQEQKEGKELSKKGSRKSAPAAAPSCPLLRLSGNAAAIKSSAMPSKATAEKRKSCPLPKKMAAAGKGVAVVKQEPKAKVESVQNGGVEDSVERGICVLGALLDPLSLDDFFSRYWESKACQVKRKRKDLYSDLVSFEMIDEMLIENHLEFTTNIDVTSYKDGVRQTHNPDGRAMPPTVWGHYSDGCSVRILNPSTYLKGLRGVCAALQEHFHCLVGANVYLTPPNSQGFAPHYDDIEAFVLQVEGRKRWRLYDAPSPNDVLARTSSGNLKQQQLSKPIFDEVLEAGDLLYFPRGCVHQAVTEQQHHSLHITLSVYQQQSYANLMEALMPAVLQNAIKHNLDMRRGLPLGTWHHLGMVHGDKKTKERSDLITHTQSLFSKYLAPTASQIDAAVDQLAIRFQHEALPPRIASSEKKRTVFGSRNKKDKHGNCRCDYDLTEQTKIRLLRQNIVRLVAQEENSLRLYYYVDNALEYCKYEANFMEIDRVEANAIKMLINSYPKYVSISSLPLPNVEHCLDTATGLWERGLLITEEPFKKN.

Disordered regions lie at residues 13–34 (KKTA…QKAA) and 48–213 (SAVK…APSC). Over residues 14–31 (KTAKKPAKKTTKQNRQKQ) the composition is skewed to basic residues. The segment covering 49-72 (AVKQNNGAKGKAKANGVKGNAKAQ) has biased composition (low complexity). Composition is skewed to acidic residues over residues 88–106 (ESVD…EDNE) and 114–129 (EDDY…EFEE). Over residues 133 to 155 (NSPSGSCSCSASSGSSNTENSPP) the composition is skewed to low complexity. The span at 190 to 199 (EQKEGKELSK) shows a compositional bias: basic and acidic residues. A compositionally biased stretch (low complexity) spans 204-213 (KSAPAAAPSC). The 140-residue stretch at 379–518 (NPSTYLKGLR…NLMEALMPAV (140 aa)) folds into the JmjC domain. 3 residues coordinate Fe cation: H419, D421, and H484.

This sequence belongs to the ROX family. NO66 subfamily. Requires Fe(2+) as cofactor.

It localises to the nucleus. It carries out the reaction N(6),N(6)-dimethyl-L-lysyl(36)-[histone H3] + 2 2-oxoglutarate + 2 O2 = L-lysyl(36)-[histone H3] + 2 formaldehyde + 2 succinate + 2 CO2. Its function is as follows. Oxygenase that can act as both a histone lysine demethylase and a ribosomal histidine hydroxylase. Specifically demethylates 'Lys-4' (H3K4me) and 'Lys-36' (H3K36me) of histone H3, thereby playing a central role in histone code. The chain is Bifunctional lysine-specific demethylase and histidyl-hydroxylase NO66 from Drosophila grimshawi (Hawaiian fruit fly).